The primary structure comprises 507 residues: Hexokinase-5 (507 aa).

A helical transmembrane segment spans residues 4-24 (AAAVGTAVVVAAAVGVAVVLA). The 455-residue stretch at 44-498 (RKVAAVIEDV…SGIGAALLAA (455 aa)) folds into the Hexokinase domain. The interval 99-237 (TGNEQGLFYA…GLDMKIAALV (139 aa)) is hexokinase small subdomain. ADP contacts are provided by Gly-113, Thr-114, and Asn-115. D-glucose contacts are provided by Thr-203, Lys-204, Asn-238, and Asp-239. The hexokinase large subdomain stretch occupies residues 238 to 487 (NDTVGTLAGG…SSVVTKLAND (250 aa)). Position 262 (Thr-262) interacts with ADP. Residues Asn-265, Glu-293, and Glu-324 each coordinate D-glucose. Gly-452 is an ADP binding site.

It belongs to the hexokinase family. As to expression, expressed in roots, leaves, flowers, immature seeds, endosperm and seed coat.

Its subcellular location is the plastid. It localises to the chloroplast outer membrane. It carries out the reaction a D-hexose + ATP = a D-hexose 6-phosphate + ADP + H(+). The catalysed reaction is D-fructose + ATP = D-fructose 6-phosphate + ADP + H(+). It catalyses the reaction D-glucose + ATP = D-glucose 6-phosphate + ADP + H(+). It functions in the pathway carbohydrate metabolism; hexose metabolism. It participates in carbohydrate degradation; glycolysis; D-glyceraldehyde 3-phosphate and glycerone phosphate from D-glucose: step 1/4. Fructose and glucose phosphorylating enzyme. Functions as a glucose sensor for plant growth and photosynthesis. Is essential for pollen development, germination, and tube growth. Its activity is necessary for the starch utilization pathway during pollen germination and tube growth, as well as for starch biosynthesis during pollen maturation. This chain is Hexokinase-5 (HXK5), found in Oryza sativa subsp. japonica (Rice).